The chain runs to 1213 residues: Genetic suppressor element 1 (1213 aa).

Residues 1 to 154 (MKGMSHEPKS…GSRGSSSGRE (154 aa)) are disordered. The residue at position 10 (Ser10) is a Phosphoserine. Polar residues predominate over residues 15 to 33 (MLSTATRTTATVNPLTPSP). Low complexity-rich tracts occupy residues 51–63 (SAQA…FAAA) and 76–89 (GSSL…VSSP). Phosphoserine is present on residues Ser84 and Ser95. The segment covering 103–114 (VPMGPIIVPPGG) has biased composition (low complexity). Arg305 carries the asymmetric dimethylarginine modification. A coiled-coil region spans residues 319–402 (HSERMSSLSA…REKELLAAKA (84 aa)). Residues 326 to 384 (LSAERLQMDEELRREREREREREREADREREKEREREQREKEREKELEREREKEREREL) are disordered. The span at 331-384 (LQMDEELRREREREREREREADREREKEREREQREKEREKELEREREKEREREL) shows a compositional bias: basic and acidic residues. The residue at position 433 (Thr433) is a Phosphothreonine. The residue at position 496 (Lys496) is an N6-acetyllysine. Disordered stretches follow at residues 527-579 (LDLG…QHTV) and 630-719 (SEKA…TARG). Basic and acidic residues-rich tracts occupy residues 537–560 (EAEH…REPP) and 630–643 (SEKA…EATP). Residues 648–657 (QPPPPPPPPR) are compositionally biased toward pro residues. Polar residues predominate over residues 681-700 (STQTILGQQRPSLSQATSFG). At Lys739 the chain carries N6-acetyllysine. A phosphoserine mark is found at Ser766, Ser826, Ser828, and Ser857. Disordered regions lie at residues 816–858 (RKRR…NNSP), 898–979 (LSAA…EAPG), and 1065–1118 (ELQS…PRRQ). Over residues 847–858 (TRYSPDEMNNSP) the composition is skewed to polar residues. At Thr905 the chain carries Phosphothreonine. Ser907 carries the phosphoserine modification. Over residues 1065-1081 (ELQSSSRVPLPQHNGQQ) the composition is skewed to polar residues. Residues 1093 to 1197 (QEADQDSEED…ELDHLRKCLA (105 aa)) adopt a coiled-coil conformation. Residues 1095–1112 (ADQDSEEDSEEDSEEEAE) show a composition bias toward acidic residues. The residue at position 1099 (Ser1099) is a Phosphoserine.

In terms of assembly, may be a component of a BHC histone deacetylase complex that contains HDAC1, HDAC2, HMG20B/BRAF35, KDM1A, RCOR1/CoREST, PHF21A/BHC80, ZMYM2, ZNF217, ZMYM3, GSE1 and GTF2I.

The polypeptide is Genetic suppressor element 1 (Gse1) (Mus musculus (Mouse)).